The following is a 328-amino-acid chain: Isopenicillin N synthase (328 aa).

4 residues coordinate isopenicillin N: R85, Y89, S181, and Y187. R85, Y89, S181, Y187, H210, and D212 together coordinate N-[(5S)-5-amino-5-carboxypentanoyl]-L-cysteinyl-D-valine. In terms of domain architecture, Fe2OG dioxygenase spans 178–284; the sequence is TLSSVSLIRY…RLSLPFFFHA (107 aa). Fe(2+) is bound by residues H210, D212, and H266. R275 is a 2-oxoglutarate binding site. Position 277 (S277) interacts with isopenicillin N. N-[(5S)-5-amino-5-carboxypentanoyl]-L-cysteinyl-D-valine is bound at residue S277.

This sequence belongs to the iron/ascorbate-dependent oxidoreductase family. It depends on Fe cation as a cofactor. Requires L-ascorbate as cofactor.

The enzyme catalyses N-[(5S)-5-amino-5-carboxypentanoyl]-L-cysteinyl-D-valine + O2 = isopenicillin N + 2 H2O. It functions in the pathway antibiotic biosynthesis; penicillin G biosynthesis; penicillin G from L-alpha-aminoadipate and L-cysteine and L-valine: step 2/3. Removes, in the presence of oxygen, 4 hydrogen atoms from delta-L-(alpha-aminoadipyl)-L-cysteinyl-D-valine (ACV) to form the azetidinone and thiazolidine rings of isopenicillin. In Amycolatopsis lactamdurans (Nocardia lactamdurans), this protein is Isopenicillin N synthase (pcbC).